Consider the following 251-residue polypeptide: Ubiquinone/menaquinone biosynthesis C-methyltransferase UbiE (251 aa).

Residues Thr-74, Asp-95, 123 to 124, and Ser-140 contribute to the S-adenosyl-L-methionine site; that span reads NA.

It belongs to the class I-like SAM-binding methyltransferase superfamily. MenG/UbiE family.

It catalyses the reaction a 2-demethylmenaquinol + S-adenosyl-L-methionine = a menaquinol + S-adenosyl-L-homocysteine + H(+). The catalysed reaction is a 2-methoxy-6-(all-trans-polyprenyl)benzene-1,4-diol + S-adenosyl-L-methionine = a 5-methoxy-2-methyl-3-(all-trans-polyprenyl)benzene-1,4-diol + S-adenosyl-L-homocysteine + H(+). It participates in quinol/quinone metabolism; menaquinone biosynthesis; menaquinol from 1,4-dihydroxy-2-naphthoate: step 2/2. Its pathway is cofactor biosynthesis; ubiquinone biosynthesis. In terms of biological role, methyltransferase required for the conversion of demethylmenaquinol (DMKH2) to menaquinol (MKH2) and the conversion of 2-polyprenyl-6-methoxy-1,4-benzoquinol (DDMQH2) to 2-polyprenyl-3-methyl-6-methoxy-1,4-benzoquinol (DMQH2). The chain is Ubiquinone/menaquinone biosynthesis C-methyltransferase UbiE from Proteus mirabilis (strain HI4320).